The following is a 180-amino-acid chain: Cytokinin-beta-glucosidase (180 aa).

Accumulates in young leaves and shoot tips.

Hydrolyzes cytokinin glucosides thus liberating free cytokinins. In Nicotiana tabacum (Common tobacco), this protein is Cytokinin-beta-glucosidase (TROLC).